The chain runs to 206 residues: MDLTVKTLEGKDAGKVSLSDAIFGLEPREDIIARVVRWQLAKRQQGTHKAKGRAEVSRTGAKMYKQKGTGRARHHSARAPQFRGGGKAHGPVVRSHAHDLPKKVRALGLRHALSAKLKAEEIIIVDDLVANEAKTKALAGAFASLGLTNALIIGGAEIEGNFKLAAQNIPNVDVLPVQGINVYDILRRGKLVLSKAAVEALEERFK.

The segment at 63 to 93 (MYKQKGTGRARHHSARAPQFRGGGKAHGPVV) is disordered. A compositionally biased stretch (basic residues) spans 64 to 77 (YKQKGTGRARHHSA).

This sequence belongs to the universal ribosomal protein uL4 family. As to quaternary structure, part of the 50S ribosomal subunit.

In terms of biological role, one of the primary rRNA binding proteins, this protein initially binds near the 5'-end of the 23S rRNA. It is important during the early stages of 50S assembly. It makes multiple contacts with different domains of the 23S rRNA in the assembled 50S subunit and ribosome. Functionally, forms part of the polypeptide exit tunnel. In Sinorhizobium medicae (strain WSM419) (Ensifer medicae), this protein is Large ribosomal subunit protein uL4.